A 337-amino-acid polypeptide reads, in one-letter code: MRLSITLIFTLIVLSISFISAGNVFSHKQYQDSFIDWMRSNNKAYTHKEFMPRYEEFKKNMDYVHNWNSKGSKTVLGLNQHADLSNEEYRLNYLGTRAHIKLNGYHKRNLGLRLNRPQFKQPLNVDWREKDAVTPVKDQGQCGSCYSFSTTGSVEGVTAIKTGKLVSLSEQNILDCSSSFGNEGCNGGLMTNAFEYIIKNNGLNSEEQYPYEMKVNDECKFQEGSVAAKITSYKEIEAGDENDLQNALLLNPVSVAIDASHNSFQLYTAGVYYEPACSSEDLDHGVLAVGMGTDNGEDYYIVKNSWGPSWGLNGYIHMARNKDNNCGISTMASYPIA.

A signal peptide spans 1–21 (MRLSITLIFTLIVLSISFISA). Residues 22–120 (GNVFSHKQYQ…GLRLNRPQFK (99 aa)) constitute a propeptide, activation peptide. Cystine bridges form between C142-C185, C176-C219, and C277-C326. The active site involves C145. Active-site residues include H284 and N304.

The protein belongs to the peptidase C1 family.

Its subcellular location is the lysosome. In Dictyostelium discoideum (Social amoeba), this protein is Cysteine proteinase 3 (cprC).